The following is a 500-amino-acid chain: L-arabinose isomerase (500 aa).

Mn(2+)-binding residues include Glu306, Glu333, His350, and His450.

Belongs to the arabinose isomerase family. Homohexamer. It depends on Mn(2+) as a cofactor.

The catalysed reaction is beta-L-arabinopyranose = L-ribulose. The protein operates within carbohydrate degradation; L-arabinose degradation via L-ribulose; D-xylulose 5-phosphate from L-arabinose (bacterial route): step 1/3. Functionally, catalyzes the conversion of L-arabinose to L-ribulose. The protein is L-arabinose isomerase of Escherichia coli O7:K1 (strain IAI39 / ExPEC).